A 712-amino-acid chain; its full sequence is Exocyst complex component EXO70I (712 aa).

Positions 1–18 (MHKKQLMALLMVPQTSDS) are cleaved as a signal peptide. Residues 26 to 53 (LESAYSDLESLLRSSKQMEQNIETMETR) are a coiled coil. An N-linked (GlcNAc...) asparagine glycan is attached at Asn-111.

This sequence belongs to the EXO70 family. Subunit of the exocyst complex that mediates vesicle tethering during exocytosis. Interacts with VPY at the periarbuscular membrane (PAM) around the arbuscule hyphal tips. Present at low levels in non-mycorrhizal root tips.

It is found in the cell membrane. Its function is as follows. Component of an exocyst subcomplex specifically required for periarbuscular membrane (PAM) biogenesis during arbuscular mycorrhizal (AM) symbiosis with AM fungi (e.g. Glomus versiforme), especially critical during the early branching phase of arbuscule development; probably involved in STR and STR2 delivery into the PAM. This Medicago truncatula (Barrel medic) protein is Exocyst complex component EXO70I.